A 342-amino-acid polypeptide reads, in one-letter code: Cathepsin B-like cysteine proteinase 1 (342 aa).

A signal peptide spans Met-1–Ala-18. Positions Asp-19–Asp-86 are cleaved as a propeptide — activation peptide. Asn-99 carries N-linked (GlcNAc...) asparagine glycosylation. Cystine bridges form between Cys-100-Cys-128, Cys-111-Cys-156, Cys-147-Cys-214, Cys-148-Cys-152, Cys-185-Cys-218, and Cys-193-Cys-205. The active site involves Cys-114. Residue Asn-138 is glycosylated (N-linked (GlcNAc...) asparagine). Residue Asn-198 is glycosylated (N-linked (GlcNAc...) asparagine). His-285 is a catalytic residue. Residue Asn-296 is glycosylated (N-linked (GlcNAc...) asparagine). Asn-305 is a catalytic residue.

The protein belongs to the peptidase C1 family.

Functionally, expression of the protease correlates with blood-feeding and suggests a role for the protease in blood digestion. This Haemonchus contortus (Barber pole worm) protein is Cathepsin B-like cysteine proteinase 1 (AC-1).